The primary structure comprises 425 residues: Serine--tRNA ligase (425 aa).

231–233 (TAE) lines the L-serine pocket. An ATP-binding site is contributed by 262–264 (RSE). Residue Glu-285 coordinates L-serine. Residue 349–352 (EISS) participates in ATP binding. Ser-385 is a binding site for L-serine.

This sequence belongs to the class-II aminoacyl-tRNA synthetase family. Type-1 seryl-tRNA synthetase subfamily. In terms of assembly, homodimer. The tRNA molecule binds across the dimer.

The protein localises to the cytoplasm. The enzyme catalyses tRNA(Ser) + L-serine + ATP = L-seryl-tRNA(Ser) + AMP + diphosphate + H(+). It carries out the reaction tRNA(Sec) + L-serine + ATP = L-seryl-tRNA(Sec) + AMP + diphosphate + H(+). The protein operates within aminoacyl-tRNA biosynthesis; selenocysteinyl-tRNA(Sec) biosynthesis; L-seryl-tRNA(Sec) from L-serine and tRNA(Sec): step 1/1. Catalyzes the attachment of serine to tRNA(Ser). Is also able to aminoacylate tRNA(Sec) with serine, to form the misacylated tRNA L-seryl-tRNA(Sec), which will be further converted into selenocysteinyl-tRNA(Sec). The polypeptide is Serine--tRNA ligase (Halalkalibacterium halodurans (strain ATCC BAA-125 / DSM 18197 / FERM 7344 / JCM 9153 / C-125) (Bacillus halodurans)).